A 94-amino-acid chain; its full sequence is Ribonuclease VapC3 (94 aa).

Mg(2+) is bound at residue Asp6.

The protein belongs to the PINc/VapC protein family. Mg(2+) serves as cofactor.

Toxic component of a type II toxin-antitoxin (TA) system. An RNase. Its cognate antitoxin is VapB3. This is Ribonuclease VapC3 (vapC3) from Methanocaldococcus jannaschii (strain ATCC 43067 / DSM 2661 / JAL-1 / JCM 10045 / NBRC 100440) (Methanococcus jannaschii).